Here is a 131-residue protein sequence, read N- to C-terminus: uncharacterized protein (131 aa).

The CCHC-type; degenerate zinc-finger motif lies at 64–81 (VNCDKCGKPGNVKNDCPG).

This is an uncharacterized protein from Homo sapiens (Human).